We begin with the raw amino-acid sequence, 508 residues long: GMP synthase [glutamine-hydrolyzing] (508 aa).

One can recognise a Glutamine amidotransferase type-1 domain in the interval 1–189; it reads MILVLDFGSQ…ALLVCGCEKT (189 aa). C78 (nucleophile) is an active-site residue. Active-site residues include H163 and E165. The GMPS ATP-PPase domain occupies 190-383; sequence WGMQHFAQKE…LGISQDFLMR (194 aa). Residue 217–223 coordinates ATP; the sequence is SGGVDST.

As to quaternary structure, homodimer.

It carries out the reaction XMP + L-glutamine + ATP + H2O = GMP + L-glutamate + AMP + diphosphate + 2 H(+). Its pathway is purine metabolism; GMP biosynthesis; GMP from XMP (L-Gln route): step 1/1. In terms of biological role, catalyzes the synthesis of GMP from XMP. The protein is GMP synthase [glutamine-hydrolyzing] of Helicobacter pylori (strain Shi470).